Reading from the N-terminus, the 343-residue chain is Protein RecA (343 aa).

Residue 68 to 75 (GPESSGKT) coordinates ATP.

This sequence belongs to the RecA family.

It localises to the cytoplasm. Can catalyze the hydrolysis of ATP in the presence of single-stranded DNA, the ATP-dependent uptake of single-stranded DNA by duplex DNA, and the ATP-dependent hybridization of homologous single-stranded DNAs. It interacts with LexA causing its activation and leading to its autocatalytic cleavage. This chain is Protein RecA, found in Syntrophobacter fumaroxidans (strain DSM 10017 / MPOB).